The chain runs to 101 residues: MPTVAYTRGGAEYTPVYLMKIDEQKCIGCGRCFKVCGRDVMSLHGLTEDGQVVAPGTDEWDEVEDEIVKKVMALTGAENCIGCGACARVCPSECQTHAALS.

2 consecutive 4Fe-4S ferredoxin-type domains span residues 17–46 and 70–100; these read YLMK…LHGL and KVMA…HAAL. Residues Cys26, Cys29, Cys32, Cys36, Cys80, Cys83, Cys86, and Cys90 each coordinate [4Fe-4S] cluster.

In terms of assembly, homodimer. It depends on [4Fe-4S] cluster as a cofactor.

Functionally, ferredoxins are iron-sulfur proteins that transfer electrons in a wide variety of metabolic reactions. This chain is Ferredoxin-3 (fdxB), found in Rhodobacter capsulatus (Rhodopseudomonas capsulata).